Reading from the N-terminus, the 1233-residue chain is STE20-like serine/threonine-protein kinase (1233 aa).

Ser14 carries the phosphoserine modification. The region spanning Trp34–Val292 is the Protein kinase domain. ATP is bound by residues Leu40–Val48 and Lys63. The active-site Proton acceptor is Asp155. Position 183 is a phosphothreonine (Thr183). Phosphoserine is present on Ser189. The interval Ala309–Asp351 is disordered. Positions Thr312 to Glu328 are enriched in acidic residues. A phosphoserine mark is found at Ser340, Ser341, Ser344, Ser347, Ser348, Ser354, and Ser372. Residues Val363–Ser399 are compositionally biased toward basic and acidic residues. Disordered stretches follow at residues Val363–Arg453, Val498–Glu650, Ala663–Leu761, and Ala772–Lys791. Residues Pro432–Asp441 are compositionally biased toward polar residues. Basic and acidic residues predominate over residues Leu518 to Lys529. 3 positions are modified to phosphoserine: Ser543, Ser561, and Ser566. The span at Gly598 to Pro607 shows a compositional bias: basic and acidic residues. The segment covering Gln619–Thr630 has biased composition (polar residues). 3 positions are modified to phosphoserine: Ser643, Ser647, and Ser666. The span at Ala690–Ser701 shows a compositional bias: low complexity. The segment covering Thr746–Leu761 has biased composition (polar residues). Residues Ser775 and Ser777 each carry the phosphoserine modification. At Thr812 the chain carries Phosphothreonine. The residue at position 816 (Ser816) is a Phosphoserine. A coiled-coil region spans residues Leu824 to Ala1067. In terms of domain architecture, UVR spans Asp873–Glu908. Residues Lys944–Gln963 form a disordered region. Low complexity predominate over residues Gln954–Gln963. Thr1095 bears the Phosphothreonine mark. A coiled-coil region spans residues Ala1107 to Arg1181. Residues Gln1109–Met1129 are disordered.

The protein belongs to the protein kinase superfamily. STE Ser/Thr protein kinase family. STE20 subfamily. Proteolytically cleaved by caspase-3. In terms of processing, autophosphorylated. In terms of tissue distribution, ubiquitously expressed.

The protein resides in the cytoplasm. The catalysed reaction is L-seryl-[protein] + ATP = O-phospho-L-seryl-[protein] + ADP + H(+). The enzyme catalyses L-threonyl-[protein] + ATP = O-phospho-L-threonyl-[protein] + ADP + H(+). Its function is as follows. Mediates apoptosis and actin stress fiber dissolution. The polypeptide is STE20-like serine/threonine-protein kinase (Slk) (Mus musculus (Mouse)).